The chain runs to 386 residues: MSKSWISKRESKLLYILLTTTELYLKTGQPVGSKTLKEYECSNLSTATIRNYFAELEAEGFLKKNHVSGGRIPTDLAFRYYVDHRADFLQDDLPETTIHLLNQLPKESQNIVKDLQKASELLGEALQLPTCFSSPRFENDSVTNIQLSLVDEQRVVVILSTEFGQIFTDTLWLAETSNYASLKRIETFLQNYLRKQPPSETLSQKEEDLGMTLYNEVVVRYLTRYCNFSEEDLYQTGLSKLLKYDAFKDPDMLALGLSFFESRCHMCKLLDIGMHRDRPTAFIGSELSDIFGTPNPHCAVITTPYYMNRTPLGAFGVLGPINLPYREIYKTLTIFADKVKESLTQSFYKFKLSFRRPCPSDPKLSKEPTLLARYSSIKLLPPKETS.

The protein belongs to the HrcA family.

In terms of biological role, negative regulator of class I heat shock genes (grpE-dnaK-dnaJ and groELS operons). Prevents heat-shock induction of these operons. The polypeptide is Heat-inducible transcription repressor HrcA (Chlamydia abortus (strain DSM 27085 / S26/3) (Chlamydophila abortus)).